A 422-amino-acid polypeptide reads, in one-letter code: G-protein coupled receptor 151 protein (422 aa).

Over 1–45 (MGKAMLRAGFADTNSSNMNESFARLHFAGGYLPSDSKDWRTIIPS) the chain is Extracellular. N-linked (GlcNAc...) asparagine glycans are attached at residues Asn-14 and Asn-19. Residues 46-66 (LLMAVCLVGLVGNLCVIGILL) traverse the membrane as a helical segment. Residues 67–76 (HGVWKRKPST) are Cytoplasmic-facing. Residues 77-97 (IHSLILNLSLADFSLLLFSAP) form a helical membrane-spanning segment. The Extracellular segment spans residues 98–123 (VRAAAYSKGVWDLGWFICKSSDWFTH). A disulfide bridge connects residues Cys-115 and Cys-191. A helical membrane pass occupies residues 124–144 (VCMAAKSLTFVVVAKACFAYA). The Cytoplasmic portion of the chain corresponds to 145–157 (SDPAKQESIHSRT). A helical transmembrane segment spans residues 158-178 (IWSVLAGIWVVASLLPLPEWL). Residues 179–205 (FSTTRRHAGVEMCLVDVPAVAEEFMSM) lie on the Extracellular side of the membrane. Residues 206-226 (FGKLYPLLVFCLPLLLAGVYF) form a helical membrane-spanning segment. At 227 to 259 (WRAYDQCKTRCTKTRNLRDQMRSKQLTVMLLST) the chain is on the cytoplasmic side. The helical transmembrane segment at 260-280 (AIISALLWLPEWIAWLWVWHV) threads the bilayer. The Extracellular portion of the chain corresponds to 281–290 (KAGGPMPPQG). Residues 291–311 (FIALSQVLMFFTSTANPLIFL) traverse the membrane as a helical segment. Residues 312-422 (VMSEEFKAGL…HEGQETEGCN (111 aa)) lie on the Cytoplasmic side of the membrane. The segment at 339–422 (VQEAPAGNTE…HEGQETEGCN (84 aa)) is disordered. Residues 366 to 380 (TDGRGSPDDSKEKSG) are compositionally biased toward basic and acidic residues.

High expression in the brain and lower levels in kidney and liver. In the nervous system expressed specifically in the habenular area (at protein level).

It localises to the cell membrane. Proton-sensing G-protein coupled receptor. The sequence is that of G-protein coupled receptor 151 protein (Gpr151) from Mus musculus (Mouse).